A 561-amino-acid chain; its full sequence is Dihydroxy-acid dehydratase (561 aa).

Position 51 (Cys-51) interacts with [2Fe-2S] cluster. Mg(2+) is bound at residue Asp-83. Residue Cys-124 coordinates [2Fe-2S] cluster. Mg(2+) is bound by residues Asp-125 and Lys-126. Lys-126 is subject to N6-carboxylysine. Cys-196 provides a ligand contact to [2Fe-2S] cluster. Glu-447 contributes to the Mg(2+) binding site. Ser-473 (proton acceptor) is an active-site residue.

This sequence belongs to the IlvD/Edd family. As to quaternary structure, homodimer. The cofactor is [2Fe-2S] cluster. Requires Mg(2+) as cofactor.

It carries out the reaction (2R)-2,3-dihydroxy-3-methylbutanoate = 3-methyl-2-oxobutanoate + H2O. It catalyses the reaction (2R,3R)-2,3-dihydroxy-3-methylpentanoate = (S)-3-methyl-2-oxopentanoate + H2O. Its pathway is amino-acid biosynthesis; L-isoleucine biosynthesis; L-isoleucine from 2-oxobutanoate: step 3/4. It functions in the pathway amino-acid biosynthesis; L-valine biosynthesis; L-valine from pyruvate: step 3/4. In terms of biological role, functions in the biosynthesis of branched-chain amino acids. Catalyzes the dehydration of (2R,3R)-2,3-dihydroxy-3-methylpentanoate (2,3-dihydroxy-3-methylvalerate) into 2-oxo-3-methylpentanoate (2-oxo-3-methylvalerate) and of (2R)-2,3-dihydroxy-3-methylbutanoate (2,3-dihydroxyisovalerate) into 2-oxo-3-methylbutanoate (2-oxoisovalerate), the penultimate precursor to L-isoleucine and L-valine, respectively. This chain is Dihydroxy-acid dehydratase, found in Oceanobacillus iheyensis (strain DSM 14371 / CIP 107618 / JCM 11309 / KCTC 3954 / HTE831).